Reading from the N-terminus, the 488-residue chain is Ribulose bisphosphate carboxylase large chain (488 aa).

Substrate contacts are provided by asparagine 127 and threonine 177. The active-site Proton acceptor is the lysine 179. Residue lysine 181 coordinates substrate. Mg(2+) contacts are provided by lysine 205, aspartate 207, and glutamate 208. Lysine 205 carries the post-translational modification N6-carboxylysine. Histidine 297 functions as the Proton acceptor in the catalytic mechanism. Substrate is bound by residues arginine 298, histidine 330, and serine 382.

It belongs to the RuBisCO large chain family. Type I subfamily. As to quaternary structure, heterohexadecamer of 8 large chains and 8 small chains. It depends on Mg(2+) as a cofactor.

The protein localises to the plastid. Its subcellular location is the chloroplast. It catalyses the reaction 2 (2R)-3-phosphoglycerate + 2 H(+) = D-ribulose 1,5-bisphosphate + CO2 + H2O. It carries out the reaction D-ribulose 1,5-bisphosphate + O2 = 2-phosphoglycolate + (2R)-3-phosphoglycerate + 2 H(+). Functionally, ruBisCO catalyzes two reactions: the carboxylation of D-ribulose 1,5-bisphosphate, the primary event in carbon dioxide fixation, as well as the oxidative fragmentation of the pentose substrate in the photorespiration process. Both reactions occur simultaneously and in competition at the same active site. The protein is Ribulose bisphosphate carboxylase large chain of Rhodomonas salina (Cryptomonas salina).